A 745-amino-acid chain; its full sequence is MSQENTLNSGDETILAEAVAPAHAVFTLSVRPDNIGIITVDVVGDKVNTLKAKFAEQIAEILQQAQALSQLQGLVIISGKPDSFIAGADITMIAACHTAQDARILAQKGQSILAQIAAFPVPVVAAIHGACLGGGLELALACHSRICSQDDKTVLGLPEVQLGLLPGSGGTQRLPRLVGVSKALDMILTGRQVRARQALKMGLVDDVVPQDILLDVAIQRAKAGWLDKPALPWQERLLSGPLGKALLFNIVRKKTQAKTKGHYPAAERIIDVVRKGLDHGGPAGYEAEAKAFGELAMTPESAALRSLFFATTSLKKESGGKAQPRAIHRVGVLGGGLMGGGIANVTATRAGLPVRIKDINPTGINQALKYTWDTLGKRVRSKRMRPAERQRQMMLISGSTDYCGFGNVDIVVEAVFEDLSLKQQMVADIEHFAAPHTIFASNTSSLPISDIAAQAQRPEQVIGLHYFSPVDKMPLVEVIPHAKTSEETIATTVALARKQGKTAIVVADRAGFYVNRILAPYINEAARCLLDGEPIASVDKALVDFGFPVGPITLLDEVGIDVGTKIIPILVEKLGARFAAPPSFDVILKDGRKGRKNGRGFYLYPAKSSGFKWKRSPVKQVDTSVYTLLGVTPKAHLESAVIAQRCTMMMLNEAARCLDESIIRNPRDGDIGAVFGIGFPPFLGGPFRYMDSLGADKVVKTLNLLAQQYGERFEPCSLLVTMAGQQKRFYPPENSLDEAAITAHN.

An enoyl-CoA hydratase region spans residues V47–P209. Residues R325 to N745 form a 3-hydroxyacyl-CoA dehydrogenase region.

The protein in the N-terminal section; belongs to the enoyl-CoA hydratase/isomerase family. It in the central section; belongs to the 3-hydroxyacyl-CoA dehydrogenase family. As to quaternary structure, heterotetramer of two alpha chains (FadJ) and two beta chains (FadI).

It localises to the cytoplasm. The catalysed reaction is a (3S)-3-hydroxyacyl-CoA = a (2E)-enoyl-CoA + H2O. It catalyses the reaction a 4-saturated-(3S)-3-hydroxyacyl-CoA = a (3E)-enoyl-CoA + H2O. The enzyme catalyses a (3S)-3-hydroxyacyl-CoA + NAD(+) = a 3-oxoacyl-CoA + NADH + H(+). It carries out the reaction (3S)-3-hydroxybutanoyl-CoA = (3R)-3-hydroxybutanoyl-CoA. It participates in lipid metabolism; fatty acid beta-oxidation. In terms of biological role, catalyzes the formation of a hydroxyacyl-CoA by addition of water on enoyl-CoA. Also exhibits 3-hydroxyacyl-CoA epimerase and 3-hydroxyacyl-CoA dehydrogenase activities. The protein is Fatty acid oxidation complex subunit alpha of Yersinia enterocolitica serotype O:8 / biotype 1B (strain NCTC 13174 / 8081).